The primary structure comprises 359 residues: DNA-directed RNA polymerase RPB3-11 homolog (359 aa).

This sequence in the N-terminal section; belongs to the archaeal RpoD/eukaryotic RPB3 RNA polymerase subunit family. It in the C-terminal section; belongs to the archaeal RpoL/eukaryotic RPB11/RPC19 RNA polymerase subunit family. As to quaternary structure, part of the viral DNA-directed RNA polymerase that consists of 8 polII-like subunits (RPB1, RPB2, RPB3, RPB5, RPB6, RPB7, RPB9, RPB10), a capping enzyme and a termination factor.

It localises to the host cytoplasm. It is found in the virion. In terms of biological role, component of the DNA-directed RNA polymerase (RNAP) that catalyzes the transcription in the cytoplasm of viral DNA into RNA using the four ribonucleoside triphosphates as substrates. In Ornithodoros (relapsing fever ticks), this protein is DNA-directed RNA polymerase RPB3-11 homolog.